We begin with the raw amino-acid sequence, 318 residues long: MPNTLEQFKSITTIVADTGDIEAIKRYQPEDATTNPSLILKAAQIPDYAHLIENAIEWAKSQSDSIEQQVEDAGDKLAVNIGVEILKIVPGRISTEVDARLSFDKAGSITKAHKLIKLYKEAGIDKSRILIKLASTWEGICAAKELEQEGINCNLTLLFSFAQARACAEAGVYLISPFVGRILDWYKKDTGLEYSSVEDPGVVSVTEIYNYYKRHGFNTVVMGASFRNTGEIIELAGCDRLTIGPALLEELANSQTEVVRKLIPTETVVDAADPLTEAQFRWEFNEDPMAVEKLAEGIRNFAIDQGKLEVMLKEKLAC.

Lys-132 serves as the catalytic Schiff-base intermediate with substrate.

It belongs to the transaldolase family. Type 1 subfamily. In terms of assembly, homodimer.

The protein resides in the cytoplasm. The enzyme catalyses D-sedoheptulose 7-phosphate + D-glyceraldehyde 3-phosphate = D-erythrose 4-phosphate + beta-D-fructose 6-phosphate. Its pathway is carbohydrate degradation; pentose phosphate pathway; D-glyceraldehyde 3-phosphate and beta-D-fructose 6-phosphate from D-ribose 5-phosphate and D-xylulose 5-phosphate (non-oxidative stage): step 2/3. In terms of biological role, transaldolase is important for the balance of metabolites in the pentose-phosphate pathway. This Shewanella sediminis (strain HAW-EB3) protein is Transaldolase.